The primary structure comprises 266 residues: Undecaprenyl-diphosphatase (266 aa).

Helical transmembrane passes span 1–21 (MDFL…FIPV), 39–59 (PGSS…FWYF), 86–106 (SIFI…LFVT), 117–137 (FSIA…DIST), 153–173 (FIGI…GATI), 190–210 (SFLL…ITSI), 216–236 (FPFL…LLAI), and 246–266 (NGLK…ILNL).

It belongs to the UppP family.

The protein resides in the cell inner membrane. The catalysed reaction is di-trans,octa-cis-undecaprenyl diphosphate + H2O = di-trans,octa-cis-undecaprenyl phosphate + phosphate + H(+). Functionally, catalyzes the dephosphorylation of undecaprenyl diphosphate (UPP). Confers resistance to bacitracin. The polypeptide is Undecaprenyl-diphosphatase (Prochlorococcus marinus (strain MIT 9515)).